Here is a 2506-residue protein sequence, read N- to C-terminus: Highly reducing polyketide synthase rstn3 (2506 aa).

Positions 8 to 436 (VEPIAIVGMA…GANAHAILDA (429 aa)) constitute a Ketosynthase family 3 (KS3) domain. Catalysis depends on for beta-ketoacyl synthase activity residues cysteine 183, histidine 318, and histidine 358. Residues 547–875 (FIFTGQGAQW…KMVGSLFLSG (329 aa)) enclose the Malonyl-CoA:ACP transacylase (MAT) domain. The tract at residues 941 to 1050 (HDLLGSRLPG…ASDQSISSVE (110 aa)) is N-terminal hotdog fold. The PKS/mFAS DH domain occupies 941–1212 (HDLLGSRLPG…FSSLETAVGE (272 aa)). The active-site Proton acceptor; for dehydratase activity is the histidine 973. The segment at 1060-1212 (NKDSYDRRWY…FSSLETAVGE (153 aa)) is C-terminal hotdog fold. Aspartate 1125 functions as the Proton donor; for dehydratase activity in the catalytic mechanism. A methyltransferase (CMet) domain region spans residues 1263-1563 (VTRLAIRSSA…SGADIVLDDY (301 aa)). In terms of domain architecture, Enoyl reductase (ER) spans 1827–2093 (GRVDSFYFKE…QDDYVGRVVL (267 aa)). Residues 2116–2296 (ASYLLIGCLG…QATSIALGMI (181 aa)) form the Ketoreductase (KR) domain. The region spanning 2423-2501 (AVKVTTLGLI…DLAEKVVALA (79 aa)) is the Carrier domain. Position 2460 is an O-(pantetheine 4'-phosphoryl)serine (serine 2460).

It depends on pantetheine 4'-phosphate as a cofactor.

Its pathway is antifungal biosynthesis. Its function is as follows. Highly reducing polyketide synthase; part of the gene cluster that mediates the biosynthesis of the tetrahydropyranyl antifungal agent restricticin that acts as an inhibitor of CYP51 and blocks the ergosterol biosynthesis. The highly reducing polyketide synthase rstn3, the short chain dehydrogenase rstn4, the cyclase rstn5, the FAD-dependent monooxygenase rstn6 and the enoylreductase rstn7 are required to generate the first stable intermediate desmethylrestrictinol. Rstn3 with rstn7 biosynthesize the first polyketide chain intermediate that is reduced by rstn4, followed by epoxidation by rstn6 before 6-endo cyclization via epoxide opening by rstn5 leads to desmethylrestrictinol. The methyltransferase rstn1 then catalyzes the C4 O-methylation of desmethylrestrictinol to produce restrictinol, and the nonribosomal peptide synthetase rstn8 catalyzes the C3 esterification of restrictinol with glycine that leads to restricticin. The polypeptide is Highly reducing polyketide synthase rstn3 (Aspergillus nomiae NRRL (strain ATCC 15546 / NRRL 13137 / CBS 260.88 / M93)).